A 76-amino-acid polypeptide reads, in one-letter code: Large ribosomal subunit protein uL29 (76 aa).

This sequence belongs to the universal ribosomal protein uL29 family.

The chain is Large ribosomal subunit protein uL29 from Gloeothece citriformis (strain PCC 7424) (Cyanothece sp. (strain PCC 7424)).